Reading from the N-terminus, the 462-residue chain is Cysteine--tRNA ligase (462 aa).

A Zn(2+)-binding site is contributed by cysteine 28. The 'HIGH' region motif lies at 30 to 40; the sequence is VTIYDLCHIGH. Residues cysteine 211, histidine 236, and glutamate 240 each contribute to the Zn(2+) site. The 'KMSKS' region motif lies at 268-272; it reads KMSKS. Lysine 271 is an ATP binding site.

The protein belongs to the class-I aminoacyl-tRNA synthetase family. As to quaternary structure, monomer. Zn(2+) serves as cofactor.

The protein localises to the cytoplasm. It carries out the reaction tRNA(Cys) + L-cysteine + ATP = L-cysteinyl-tRNA(Cys) + AMP + diphosphate. In Aliivibrio salmonicida (strain LFI1238) (Vibrio salmonicida (strain LFI1238)), this protein is Cysteine--tRNA ligase.